The sequence spans 104 residues: Ubiquitin-related modifier 1 homolog (104 aa).

Glycine 104 is subject to 1-thioglycine. Residue glycine 104 forms a Glycyl lysine isopeptide (Gly-Lys) (interchain with K-? in acceptor proteins) linkage.

Belongs to the URM1 family. In terms of assembly, interacts with cer. In terms of processing, C-terminal thiocarboxylation occurs in 2 steps, it is first acyl-adenylated (-COAMP) via the hesA/moeB/thiF part of the MOCS3 homolog, then thiocarboxylated (-COSH) via the rhodanese domain of the MOCS3 homolog.

It localises to the cytoplasm. It participates in tRNA modification; 5-methoxycarbonylmethyl-2-thiouridine-tRNA biosynthesis. Its function is as follows. Acts as a sulfur carrier required for 2-thiolation of mcm(5)S(2)U at tRNA wobble positions of cytosolic tRNA(Lys), tRNA(Glu) and tRNA(Gln). Serves as sulfur donor in tRNA 2-thiolation reaction by being thiocarboxylated (-COSH) at its C-terminus by MOCS3. The sulfur is then transferred to tRNA to form 2-thiolation of mcm(5)S(2)U. Also acts as a ubiquitin-like protein (UBL) that is covalently conjugated via an isopeptide bond to lysine residues of target proteins such as Prx2/Jafrac1, Ciao1, Eip71CD and GILT1. The thiocarboxylated form serves as substrate for conjugation and oxidative stress specifically induces the formation of UBL-protein conjugates. This chain is Ubiquitin-related modifier 1 homolog, found in Drosophila grimshawi (Hawaiian fruit fly).